A 363-amino-acid polypeptide reads, in one-letter code: Phosphoribosylformylglycinamidine cyclo-ligase (363 aa).

It belongs to the AIR synthase family.

Its subcellular location is the cytoplasm. The enzyme catalyses 2-formamido-N(1)-(5-O-phospho-beta-D-ribosyl)acetamidine + ATP = 5-amino-1-(5-phospho-beta-D-ribosyl)imidazole + ADP + phosphate + H(+). Its pathway is purine metabolism; IMP biosynthesis via de novo pathway; 5-amino-1-(5-phospho-D-ribosyl)imidazole from N(2)-formyl-N(1)-(5-phospho-D-ribosyl)glycinamide: step 2/2. The polypeptide is Phosphoribosylformylglycinamidine cyclo-ligase (Brucella anthropi (strain ATCC 49188 / DSM 6882 / CCUG 24695 / JCM 21032 / LMG 3331 / NBRC 15819 / NCTC 12168 / Alc 37) (Ochrobactrum anthropi)).